A 409-amino-acid chain; its full sequence is Phosphatidylserine decarboxylase proenzyme, mitochondrial (409 aa).

Residues 1-52 constitute a mitochondrion transit peptide; the sequence is MATSVGHRCLGLLHGVAPWRSSLHPCEITALSQSLQPLRKLPFRAFRTDARK. The tract at residues 36 to 103 is necessary for localization to both lipid droplets and mitochondria; the sequence is QPLRKLPFRA…LGLEIPPKLA (68 aa). Residues 53 to 63 lie on the Mitochondrial matrix side of the membrane; sequence IHTAPARTMFL. A helical membrane pass occupies residues 64–82; the sequence is LRPLPILLVTGGGYAGYRQ. At 83–409 the chain is on the mitochondrial intermembrane side; the sequence is YEKYRERELE…IRFGEALGSL (327 aa). Catalysis depends on charge relay system; for autoendoproteolytic cleavage activity residues Asp191, His267, and Ser378. Ser378 functions as the Schiff-base intermediate with substrate; via pyruvic acid; for decarboxylase activity in the catalytic mechanism. Position 378 is a pyruvic acid (Ser); by autocatalysis (Ser378).

This sequence belongs to the phosphatidylserine decarboxylase family. PSD-B subfamily. Eukaryotic type I sub-subfamily. Heterodimer of a large membrane-associated beta subunit and a small pyruvoyl-containing alpha subunit. It depends on pyruvate as a cofactor. Is synthesized initially as an inactive proenzyme. Formation of the active enzyme involves a self-maturation process in which the active site pyruvoyl group is generated from an internal serine residue via an autocatalytic post-translational modification. Two non-identical subunits are generated from the proenzyme in this reaction, and the pyruvate is formed at the N-terminus of the alpha chain, which is derived from the carboxyl end of the proenzyme. The autoendoproteolytic cleavage occurs by a canonical serine protease mechanism, in which the side chain hydroxyl group of the serine supplies its oxygen atom to form the C-terminus of the beta chain, while the remainder of the serine residue undergoes an oxidative deamination to produce ammonia and the pyruvoyl prosthetic group on the alpha chain. During this reaction, the Ser that is part of the protease active site of the proenzyme becomes the pyruvoyl prosthetic group, which constitutes an essential element of the active site of the mature decarboxylase.

The protein resides in the mitochondrion inner membrane. It localises to the cytoplasm. The protein localises to the lipid droplet. The catalysed reaction is a 1,2-diacyl-sn-glycero-3-phospho-L-serine + H(+) = a 1,2-diacyl-sn-glycero-3-phosphoethanolamine + CO2. It functions in the pathway phospholipid metabolism; phosphatidylethanolamine biosynthesis. Its function is as follows. Catalyzes the formation of phosphatidylethanolamine (PtdEtn) from phosphatidylserine (PtdSer). Plays a central role in phospholipid metabolism and in the interorganelle trafficking of phosphatidylserine. May be involved in lipid droplet biogenesis at the endoplasmic reticulum membrane. The chain is Phosphatidylserine decarboxylase proenzyme, mitochondrial from Homo sapiens (Human).